The following is a 206-amino-acid chain: Ribosomal RNA small subunit methyltransferase G (206 aa).

Residues Gly73, Leu78, 124-125 (VE), and Arg139 contribute to the S-adenosyl-L-methionine site.

The protein belongs to the methyltransferase superfamily. RNA methyltransferase RsmG family.

It is found in the cytoplasm. The enzyme catalyses guanosine(527) in 16S rRNA + S-adenosyl-L-methionine = N(7)-methylguanosine(527) in 16S rRNA + S-adenosyl-L-homocysteine. Its function is as follows. Specifically methylates the N7 position of guanine in position 527 of 16S rRNA. In Edwardsiella ictaluri (strain 93-146), this protein is Ribosomal RNA small subunit methyltransferase G.